The primary structure comprises 607 residues: UvrABC system protein C (607 aa).

The 79-residue stretch at 19–97 (TLSGVYQMRD…IKQYQPKFNI (79 aa)) folds into the GIY-YIG domain. The region spanning 205 to 240 (EHLLQTLTEHMLQASAAQQYERAAIVRDQISELRTI) is the UVR domain.

Belongs to the UvrC family. Interacts with UvrB in an incision complex.

The protein resides in the cytoplasm. Its function is as follows. The UvrABC repair system catalyzes the recognition and processing of DNA lesions. UvrC both incises the 5' and 3' sides of the lesion. The N-terminal half is responsible for the 3' incision and the C-terminal half is responsible for the 5' incision. The chain is UvrABC system protein C from Dichelobacter nodosus (strain VCS1703A).